Consider the following 255-residue polypeptide: Ribonuclease HII (255 aa).

Positions 72 to 255 constitute an RNase H type-2 domain; that stretch reads RLIAGIDEVG…RTFAPIKDMI (184 aa). The a divalent metal cation site is built by Asp-78, Glu-79, and Asp-170.

The protein belongs to the RNase HII family. Requires Mn(2+) as cofactor. Mg(2+) is required as a cofactor.

The protein localises to the cytoplasm. It catalyses the reaction Endonucleolytic cleavage to 5'-phosphomonoester.. Functionally, endonuclease that specifically degrades the RNA of RNA-DNA hybrids. In Enterococcus faecalis (strain ATCC 700802 / V583), this protein is Ribonuclease HII.